A 121-amino-acid chain; its full sequence is Large ribosomal subunit protein uL14 (121 aa).

This sequence belongs to the universal ribosomal protein uL14 family. As to quaternary structure, part of the 50S ribosomal subunit. Forms a cluster with proteins L3 and L19. In the 70S ribosome, L14 and L19 interact and together make contacts with the 16S rRNA in bridges B5 and B8.

Binds to 23S rRNA. Forms part of two intersubunit bridges in the 70S ribosome. The chain is Large ribosomal subunit protein uL14 from Synechococcus elongatus (strain ATCC 33912 / PCC 7942 / FACHB-805) (Anacystis nidulans R2).